The sequence spans 622 residues: Leucine-rich repeat and immunoglobulin-like domain-containing nogo receptor-interacting protein 1-B (622 aa).

A signal peptide spans 1–43; it reads MTFLQVTIKMVAREASGHSYLVACWQPILILMLGTVLSGSATG. 2 cysteine pairs are disulfide-bonded: C44–C50 and C48–C59. The LRRNT domain maps to 44–73; that stretch reads CPSRCECSAQERSVVCHRRKLITLPEGIPI. The Extracellular segment spans residues 44-563; it reads CPSRCECSAQ…FDMKTLIIAT (520 aa). 11 LRR repeats span residues 74 to 95, 98 to 119, 122 to 143, 146 to 167, 170 to 191, 194 to 215, 218 to 239, 266 to 287, 290 to 311, 314 to 335, and 338 to 359; these read DTRLLDLSKNRLKAINPEEFLN, QLEDLQLNENIISVIEPGAFSN, GLRTLGLRNNNLKLIQLGVFTG, NLTRLDISENKIVILLDYMFQE, NLKELEVGDNDLVFISHRAFHG, SLEQLTMERCNLTSVPTEAFSH, NLLTLKLRHLNVNVIRDFSFRR, NITTLSITNCNLTAVPYVAIQH, YLRFFNLSFNPIEVVEGNKMHN, RLQAFHLVGGRLVSIEPYSFKG, and YLRVLNVSSNSLSTLEESAFHS. N146 carries an N-linked (GlcNAc...) asparagine glycan. N204 carries an N-linked (GlcNAc...) asparagine glycan. N-linked (GlcNAc...) asparagine glycosylation is found at N266, N276, and N295. The N-linked (GlcNAc...) asparagine glycan is linked to N343. The 55-residue stretch at 371–425 folds into the LRRCT domain; it reads NPLACDCRLLWVFRRRWRLNFNRQQPSCETPEFLQGKEFKDFPDVLPPNYFTCQK. 3 disulfide bridges follow: C375–C398, C377–C423, and C448–C499. The Ig-like C2-type domain occupies 413–515; the sequence is PDVLPPNYFT…GNDTRLAHLH (103 aa). N494, N507, N528, and N544 each carry an N-linked (GlcNAc...) asparagine glycan. A helical transmembrane segment spans residues 564–584; sequence TMGFISFLGVVLFCLVLLFLW. Over 585–622 the chain is Cytoplasmic; it reads SRGKGNAKPNIEIEYVPRKVDGENSPNEGSHKISMKMI.

It localises to the cell membrane. May play a role in regulating axonal regeneration and plasticity in the adult central nervous system. The polypeptide is Leucine-rich repeat and immunoglobulin-like domain-containing nogo receptor-interacting protein 1-B (lingo1b) (Danio rerio (Zebrafish)).